Here is a 214-residue protein sequence, read N- to C-terminus: Redox-sensing transcriptional repressor Rex (214 aa).

Positions 17–56 (LYYRIFKRFHADQVEKASSKQIADAMGIDSATVRRDFSYF) form a DNA-binding region, H-T-H motif. 91–96 (GCGNIG) serves as a coordination point for NAD(+).

This sequence belongs to the transcriptional regulatory Rex family. In terms of assembly, homodimer.

The protein localises to the cytoplasm. Its function is as follows. Modulates transcription in response to changes in cellular NADH/NAD(+) redox state. This is Redox-sensing transcriptional repressor Rex from Streptococcus pyogenes serotype M4 (strain MGAS10750).